The following is a 139-amino-acid chain: Large ribosomal subunit protein uL14 (139 aa).

It belongs to the universal ribosomal protein uL14 family.

The sequence is that of Large ribosomal subunit protein uL14 (RPL23) from Syntrichia ruralis (Great hairy screw-moss).